The following is a 155-amino-acid chain: Histone H2B.4 (155 aa).

The segment covering 1–28 (MAPKTKEEKPASEAVEPKAEAKPKAEKA) has biased composition (basic and acidic residues). The segment at 1-62 (MAPKTKEEKP…GDKKKKKAKV (62 aa)) is disordered. The segment covering 29 to 40 (PKKKEKKAPAKK) has biased composition (basic residues). Lys151 is covalently cross-linked (Glycyl lysine isopeptide (Lys-Gly) (interchain with G-Cter in ubiquitin)).

It belongs to the histone H2B family. The nucleosome is a histone octamer containing two molecules each of H2A, H2B, H3 and H4 assembled in one H3-H4 heterotetramer and two H2A-H2B heterodimers. The octamer wraps approximately 147 bp of DNA. In terms of processing, monoubiquitinated to form H2BK143ub1; may give a specific tag for epigenetic transcriptional activation.

The protein localises to the nucleus. It localises to the chromosome. Functionally, core component of nucleosome. Nucleosomes wrap and compact DNA into chromatin, limiting DNA accessibility to the cellular machineries which require DNA as a template. Histones thereby play a central role in transcription regulation, DNA repair, DNA replication and chromosomal stability. DNA accessibility is regulated via a complex set of post-translational modifications of histones, also called histone code, and nucleosome remodeling. The chain is Histone H2B.4 from Volvox carteri (Green alga).